A 106-amino-acid polypeptide reads, in one-letter code: MQKIRKGDEVVVITGKDKGKRGTVLRVLPTEGRVVVEGVNVVKKHQKPNPVKGQAGGIVDKTLSIDVSNVAIFNPATQKADRVGVKTLEDGRKVRVFKSNGELVGA.

The protein belongs to the universal ribosomal protein uL24 family. As to quaternary structure, part of the 50S ribosomal subunit.

Functionally, one of two assembly initiator proteins, it binds directly to the 5'-end of the 23S rRNA, where it nucleates assembly of the 50S subunit. Its function is as follows. One of the proteins that surrounds the polypeptide exit tunnel on the outside of the subunit. The protein is Large ribosomal subunit protein uL24 of Laribacter hongkongensis (strain HLHK9).